The primary structure comprises 378 residues: Succinyl-diaminopimelate desuccinylase (378 aa).

His-68 contacts Zn(2+). Asp-70 is a catalytic residue. Zn(2+) is bound at residue Asp-102. The active-site Proton acceptor is the Glu-136. 3 residues coordinate Zn(2+): Glu-137, Glu-165, and His-351.

It belongs to the peptidase M20A family. DapE subfamily. As to quaternary structure, homodimer. Zn(2+) is required as a cofactor. The cofactor is Co(2+).

The catalysed reaction is N-succinyl-(2S,6S)-2,6-diaminopimelate + H2O = (2S,6S)-2,6-diaminopimelate + succinate. It functions in the pathway amino-acid biosynthesis; L-lysine biosynthesis via DAP pathway; LL-2,6-diaminopimelate from (S)-tetrahydrodipicolinate (succinylase route): step 3/3. Functionally, catalyzes the hydrolysis of N-succinyl-L,L-diaminopimelic acid (SDAP), forming succinate and LL-2,6-diaminopimelate (DAP), an intermediate involved in the bacterial biosynthesis of lysine and meso-diaminopimelic acid, an essential component of bacterial cell walls. This chain is Succinyl-diaminopimelate desuccinylase, found in Pseudomonas syringae pv. syringae.